The following is a 117-amino-acid chain: uncharacterized protein (117 aa).

4 helical membrane-spanning segments follow: residues 3-23 (AVPI…NILL), 40-60 (FLTP…LLFA), 66-86 (LEVS…LIIA), and 94-114 (PFHL…IFLA).

It to E.coli and S.aureus ethidium bromide resistance proteins (ebr/QacC/EmrE/MvrC).

It localises to the cell membrane. This is an uncharacterized protein from Sinorhizobium fredii (strain NBRC 101917 / NGR234).